Consider the following 43-residue polypeptide: DRDSCVDKSKCGKYGYYQECQDCCKNAGHNGGTCVYYKCKCNP.

Intrachain disulfides connect C5–C23, C11–C34, C20–C39, and C24–C41.

It belongs to the ergtoxin family. Gamma-KTx 4 subfamily. Expressed by the venom gland.

It localises to the secreted. Reversibly blocks Kv11/ERG potassium channels. The polypeptide is Potassium channel toxin gamma-KTx 4.2 (Centruroides noxius (Mexican scorpion)).